We begin with the raw amino-acid sequence, 339 residues long: Ketol-acid reductoisomerase (NADP(+)) (339 aa).

Residues 1–182 (MRVYYDRDAD…GGGRAGIIET (182 aa)) enclose the KARI N-terminal Rossmann domain. NADP(+) is bound by residues 24–27 (YGSQ), Arg-48, Ser-51, Thr-53, and 83–86 (DELQ). The active site involves His-108. Gly-134 provides a ligand contact to NADP(+). Positions 183–328 (TFKEECETDL…AKLRGMMPWI (146 aa)) constitute a KARI C-terminal knotted domain. Residues Asp-191, Glu-195, Glu-227, and Glu-231 each coordinate Mg(2+). Residue Ser-252 coordinates substrate.

The protein belongs to the ketol-acid reductoisomerase family. Mg(2+) is required as a cofactor.

The catalysed reaction is (2R)-2,3-dihydroxy-3-methylbutanoate + NADP(+) = (2S)-2-acetolactate + NADPH + H(+). The enzyme catalyses (2R,3R)-2,3-dihydroxy-3-methylpentanoate + NADP(+) = (S)-2-ethyl-2-hydroxy-3-oxobutanoate + NADPH + H(+). The protein operates within amino-acid biosynthesis; L-isoleucine biosynthesis; L-isoleucine from 2-oxobutanoate: step 2/4. It functions in the pathway amino-acid biosynthesis; L-valine biosynthesis; L-valine from pyruvate: step 2/4. In terms of biological role, involved in the biosynthesis of branched-chain amino acids (BCAA). Catalyzes an alkyl-migration followed by a ketol-acid reduction of (S)-2-acetolactate (S2AL) to yield (R)-2,3-dihydroxy-isovalerate. In the isomerase reaction, S2AL is rearranged via a Mg-dependent methyl migration to produce 3-hydroxy-3-methyl-2-ketobutyrate (HMKB). In the reductase reaction, this 2-ketoacid undergoes a metal-dependent reduction by NADPH to yield (R)-2,3-dihydroxy-isovalerate. This is Ketol-acid reductoisomerase (NADP(+)) from Methylorubrum populi (strain ATCC BAA-705 / NCIMB 13946 / BJ001) (Methylobacterium populi).